The primary structure comprises 1463 residues: DNA-directed RNA polymerase subunit beta'' (1463 aa).

Zn(2+)-binding residues include Cys-239, Cys-312, Cys-319, and Cys-322. Disordered stretches follow at residues Thr-836 to Met-869 and Thr-987 to Arg-1007. The segment covering Ala-860–Met-869 has biased composition (polar residues). A compositionally biased stretch (basic residues) spans Thr-987–Ala-996. Polar residues predominate over residues Ser-997 to Arg-1007.

This sequence belongs to the RNA polymerase beta' chain family. RpoC2 subfamily. As to quaternary structure, in plastids the minimal PEP RNA polymerase catalytic core is composed of four subunits: alpha, beta, beta', and beta''. When a (nuclear-encoded) sigma factor is associated with the core the holoenzyme is formed, which can initiate transcription. It depends on Zn(2+) as a cofactor.

The protein localises to the plastid. The protein resides in the chloroplast. It carries out the reaction RNA(n) + a ribonucleoside 5'-triphosphate = RNA(n+1) + diphosphate. In terms of biological role, DNA-dependent RNA polymerase catalyzes the transcription of DNA into RNA using the four ribonucleoside triphosphates as substrates. The sequence is that of DNA-directed RNA polymerase subunit beta'' from Nephroselmis olivacea (Green alga).